Reading from the N-terminus, the 162-residue chain is UPF0114 protein PSPA7_5214 (162 aa).

Helical transmembrane passes span 15 to 35, 53 to 73, and 136 to 156; these read LLAPIYMGLSLALLALTIKFF, LILVLLSLIDMALVGGLLVMV, and LMWYVIIHMTFVLSAFAMGYL.

This sequence belongs to the UPF0114 family.

It is found in the cell membrane. The polypeptide is UPF0114 protein PSPA7_5214 (Pseudomonas paraeruginosa (strain DSM 24068 / PA7) (Pseudomonas aeruginosa (strain PA7))).